The chain runs to 220 residues: Putative DNA repair glycosylase MJ1434 (220 aa).

Residues cysteine 202, cysteine 208, cysteine 211, and cysteine 217 each contribute to the [4Fe-4S] cluster site.

Belongs to the Nth/MutY family. It depends on [4Fe-4S] cluster as a cofactor.

This chain is Putative DNA repair glycosylase MJ1434, found in Methanocaldococcus jannaschii (strain ATCC 43067 / DSM 2661 / JAL-1 / JCM 10045 / NBRC 100440) (Methanococcus jannaschii).